Consider the following 578-residue polypeptide: Arginine--tRNA ligase (578 aa).

Positions 127-137 (PNLAKEMHVGH) match the 'HIGH' region motif.

This sequence belongs to the class-I aminoacyl-tRNA synthetase family. Monomer.

The protein localises to the cytoplasm. The enzyme catalyses tRNA(Arg) + L-arginine + ATP = L-arginyl-tRNA(Arg) + AMP + diphosphate. The chain is Arginine--tRNA ligase from Pseudomonas savastanoi pv. phaseolicola (strain 1448A / Race 6) (Pseudomonas syringae pv. phaseolicola (strain 1448A / Race 6)).